Consider the following 472-residue polypeptide: MIMKLVEDLLNKNLDIDEYVERTYERIEKIEKKIKAFITIRDKEEVKREVREKLKNPKGKLSGILIAIKDNISTKGIRTTCASRMLEDYVPPYDATVIEKLKQEGAVILGKTNMDEFAMGSTTETSYFGPTRNPWDLERTPGGSSGGSGAALAAGIVDIALGSDTGGSIRAPAAYNAVFGLKPSYGTVSRFGLVAYANSLEQIGPMAKNAEDLALLYSIISGDDPKDATTIHFEPQVPEKVELKDVKIAVLKDIVEASDKPVVSIFNSTLDKLSSEGAIIKEVNLGYAEYALPAYYIIAMSEASSNLARFDGVRYGYSKYSEGNWRETFAKNRGEGFGIEVKRRILLGSFILSAGYYEEFYIKALKIRRLIKDNVDNILKEFDLIASPTMPILPPKIGEVVEDPIKMYAMDLNTVIANLAGVPALSQPAGFYNNLPIGLQLMGRYLSDYYIMAISAKIEKVLNLYDLTAPIS.

Catalysis depends on charge relay system residues Lys-69 and Ser-144. Catalysis depends on Ser-168, which acts as the Acyl-ester intermediate.

This sequence belongs to the amidase family. GatA subfamily. In terms of assembly, heterotrimer of A, B and C subunits.

The enzyme catalyses L-glutamyl-tRNA(Gln) + L-glutamine + ATP + H2O = L-glutaminyl-tRNA(Gln) + L-glutamate + ADP + phosphate + H(+). Its function is as follows. Allows the formation of correctly charged Gln-tRNA(Gln) through the transamidation of misacylated Glu-tRNA(Gln) in organisms which lack glutaminyl-tRNA synthetase. The reaction takes place in the presence of glutamine and ATP through an activated gamma-phospho-Glu-tRNA(Gln). The chain is Glutamyl-tRNA(Gln) amidotransferase subunit A from Sulfurisphaera tokodaii (strain DSM 16993 / JCM 10545 / NBRC 100140 / 7) (Sulfolobus tokodaii).